The following is a 230-amino-acid chain: Ribonuclease 3 (230 aa).

In terms of domain architecture, RNase III spans 5–125 (YSRFYNILGY…VIGAIYLDSD (121 aa)). Glutamate 40 is a Mg(2+) binding site. The active site involves aspartate 44. Positions 111 and 114 each coordinate Mg(2+). Residue glutamate 114 is part of the active site. The 71-residue stretch at 153–223 (DSKSKLQEIL…AEKMIEMLSQ (71 aa)) folds into the DRBM domain.

The protein belongs to the ribonuclease III family. As to quaternary structure, homodimer. Mg(2+) serves as cofactor.

Its subcellular location is the cytoplasm. It carries out the reaction Endonucleolytic cleavage to 5'-phosphomonoester.. Digests double-stranded RNA. Involved in the processing of primary rRNA transcript to yield the immediate precursors to the large and small rRNAs (23S and 16S). Processes some mRNAs, and tRNAs when they are encoded in the rRNA operon. Processes pre-crRNA and tracrRNA of type II CRISPR loci if present in the organism. The protein is Ribonuclease 3 of Francisella tularensis subsp. holarctica (strain FTNF002-00 / FTA).